Reading from the N-terminus, the 248-residue chain is Probable transcriptional regulatory protein Mpop_0922 (248 aa).

Belongs to the TACO1 family.

It localises to the cytoplasm. This Methylorubrum populi (strain ATCC BAA-705 / NCIMB 13946 / BJ001) (Methylobacterium populi) protein is Probable transcriptional regulatory protein Mpop_0922.